The primary structure comprises 395 residues: Transcriptional coactivator yorkie (395 aa).

Residues Asn-73–Ser-100 are disordered. Phosphoserine occurs at positions 82, 88, 100, 117, and 145. A compositionally biased stretch (polar residues) spans Ser-84–Ser-100. 2 disordered regions span residues Pro-129–Leu-150 and Ala-162–Ser-199. Position 146 is a phosphoserine; by CDK7 (Ser-146). Residue Ser-149 is modified to Phosphoserine. Low complexity predominate over residues Ala-162 to Ala-179. Ser-227 carries the phosphoserine modification. Phosphotyrosine is present on Tyr-228. The residue at position 232 (Ser-232) is a Phosphoserine. WW domains are found at residues Gly-241 to Ile-274 and Gly-310 to Met-343.

This sequence belongs to the YAP1 family. Interacts (via WW domains) with wts. Interacts (via N-terminus) with sd (via C-terminus) and this interaction enhances the transcriptional activity of sd. The phosphorylated form interacts with 14-3-3epsilon and 14-3-3zeta. Interacts with Ack and ex. Post-translationally, its activity is regulated by multiple phosphorylation events. Phosphorylation at Ser-88, Ser-145 and Ser-227 negatively regulate its activity and restrict its nuclear localization. Wts-mediated phosphorylation at Ser-145 promotes interaction with 14-3-3epsilon and 14-3-3zeta. Phosphorylation at Ser-88 and Ser-227 regulate nuclear localization and activity independent of 14-3-3 association. Phosphorylation at Ser-146 by Cdk7 promotes its stability by preventing ubiquitination by the DCX(DCAF12) complex. Ubiquitinated by the DCX(DCAF12) complex, leading to its degradation. Phosphorylation at Ser-146 by Cdk7 prevents ubiquitination by the DCX(DCAF12) complex.

The protein resides in the cytoplasm. It localises to the nucleus. Its function is as follows. Transcriptional coactivator which is the critical downstream regulatory target in the Hippo/SWH (Sav/Wts/Hpo) signaling pathway that plays a pivotal role in organ size control and tumor suppression by restricting proliferation and promoting apoptosis. The core of this pathway is composed of a kinase cascade wherein Hippo (Hpo), in complex with its regulatory protein Salvador (Sav), phosphorylates and activates Warts (Wts) in complex with its regulatory protein Mats, which in turn phosphorylates and inactivates the Yorkie (Yki) oncoprotein. The Hippo/SWH signaling pathway inhibits the activity of the transcriptional complex formed by Scalloped (sd) and Yki and the target genes of this pathway include cyclin-E (cycE), diap1 and bantam. Regulates the expression of G1/S-specific CycE and diap1, thereby promoting cell proliferation and inhibiting apoptosis. Required for transcriptional activity of sd in wing imaginal disks. Induces expression of expression of vestigial (vg) in wing and haltere disks and the expression of transcription factor E2f (E2f). The protein is Transcriptional coactivator yorkie (yki) of Drosophila melanogaster (Fruit fly).